We begin with the raw amino-acid sequence, 992 residues long: Translation initiation factor IF-2 (992 aa).

2 disordered regions span residues 154–173 (RRLRDEQAAQEAAREREREA) and 338–399 (AAPG…RPES). Residues 492-661 (PRAPVVTVMG…LLQAEVLELK (170 aa)) form the tr-type G domain. Positions 501 to 508 (GHVDHGKT) are G1. GTP is bound at residue 501–508 (GHVDHGKT). The interval 526-530 (GITQH) is G2. Positions 547-550 (DTPG) are G3. Residues 547-551 (DTPGH) and 601-604 (NKID) each bind GTP. The G4 stretch occupies residues 601 to 604 (NKID). A G5 region spans residues 637–639 (SAH).

Belongs to the TRAFAC class translation factor GTPase superfamily. Classic translation factor GTPase family. IF-2 subfamily.

Its subcellular location is the cytoplasm. In terms of biological role, one of the essential components for the initiation of protein synthesis. Protects formylmethionyl-tRNA from spontaneous hydrolysis and promotes its binding to the 30S ribosomal subunits. Also involved in the hydrolysis of GTP during the formation of the 70S ribosomal complex. The protein is Translation initiation factor IF-2 of Polaromonas naphthalenivorans (strain CJ2).